A 304-amino-acid polypeptide reads, in one-letter code: N-acetylmuramic acid 6-phosphate etherase (304 aa).

Residues 62–225 (IVQAFQNGGR…TTASMVMIGK (164 aa)) form the SIS domain. The active-site Proton donor is the Glu90. Residue Glu121 is part of the active site.

This sequence belongs to the GCKR-like family. MurNAc-6-P etherase subfamily. As to quaternary structure, homodimer.

The enzyme catalyses N-acetyl-D-muramate 6-phosphate + H2O = N-acetyl-D-glucosamine 6-phosphate + (R)-lactate. The protein operates within amino-sugar metabolism; 1,6-anhydro-N-acetylmuramate degradation. It functions in the pathway amino-sugar metabolism; N-acetylmuramate degradation. It participates in cell wall biogenesis; peptidoglycan recycling. Functionally, specifically catalyzes the cleavage of the D-lactyl ether substituent of MurNAc 6-phosphate, producing GlcNAc 6-phosphate and D-lactate. Together with AnmK, is also required for the utilization of anhydro-N-acetylmuramic acid (anhMurNAc) either imported from the medium or derived from its own cell wall murein, and thus plays a role in cell wall recycling. The protein is N-acetylmuramic acid 6-phosphate etherase of Actinobacillus pleuropneumoniae serotype 7 (strain AP76).